Consider the following 372-residue polypeptide: 4-hydroxy-3-methylbut-2-en-1-yl diphosphate synthase (flavodoxin) (372 aa).

The [4Fe-4S] cluster site is built by Cys270, Cys273, Cys305, and Glu312.

It belongs to the IspG family. [4Fe-4S] cluster serves as cofactor.

The enzyme catalyses (2E)-4-hydroxy-3-methylbut-2-enyl diphosphate + oxidized [flavodoxin] + H2O + 2 H(+) = 2-C-methyl-D-erythritol 2,4-cyclic diphosphate + reduced [flavodoxin]. It participates in isoprenoid biosynthesis; isopentenyl diphosphate biosynthesis via DXP pathway; isopentenyl diphosphate from 1-deoxy-D-xylulose 5-phosphate: step 5/6. Its function is as follows. Converts 2C-methyl-D-erythritol 2,4-cyclodiphosphate (ME-2,4cPP) into 1-hydroxy-2-methyl-2-(E)-butenyl 4-diphosphate. The sequence is that of 4-hydroxy-3-methylbut-2-en-1-yl diphosphate synthase (flavodoxin) from Salmonella gallinarum (strain 287/91 / NCTC 13346).